A 686-amino-acid polypeptide reads, in one-letter code: Putative cuticle collagen 99 (686 aa).

Disordered stretches follow at residues 42–79 and 163–444; these read PPIG…PVGP and GPIG…SLVA. A compositionally biased stretch (pro residues) spans 67 to 79; sequence PPGPPGERGPVGP. Triple-helical region regions lie at residues 142–201, 230–263, and 268–296; these read GMPG…KGDR, GPPG…GFDG, and GPKG…EKGD. Residues 231–243 show a composition bias toward pro residues; the sequence is PPGPPGPPGPPGP. Positions 246-256 are enriched in basic and acidic residues; the sequence is RDGRHGMKGDR. Low complexity predominate over residues 306–318; the sequence is GQSVSTVSSSGSQ. Composition is skewed to basic and acidic residues over residues 361 to 373 and 401 to 417; these read EKGE…ETGD and RDGR…HGLR. A triple-helical region region spans residues 394–439; the sequence is GPPGPPGRDGRPGEKGEKGEHGLRGDMGLPGPEGTPGKRGRRGRHG. N-linked (GlcNAc...) asparagine glycosylation is found at asparagine 446 and asparagine 535. Residues 475 to 650 form a disordered region; that stretch reads KNVIPGPPGP…TGPDGLPLPY (176 aa). 3 triple-helical region regions span residues 479–536, 538–576, and 577–636; these read PGPP…SGNQ, GPRG…PGPM, and GLRG…PGLD. Pro residues predominate over residues 540 to 549; it reads RGPPGLPGPP. Low complexity predominate over residues 563–581; it reads QPGALGLPGHPGPMGLRGP.

This sequence belongs to the cuticular collagen family. As to quaternary structure, collagen polypeptide chains are complexed within the cuticle by disulfide bonds and other types of covalent cross-links.

Nematode cuticles are composed largely of collagen-like proteins. The cuticle functions both as an exoskeleton and as a barrier to protect the worm from its environment. In Caenorhabditis briggsae, this protein is Putative cuticle collagen 99.